The following is a 440-amino-acid chain: MTTPHATPRATTEGTVYTVTGGDWDEVVESAVKSDDERIIVNMGPQHPSTHGVLRLILEIDGETVTEARCGIGYLHTGIEKNLEFRNWTQGTTFVTRMDYLTPFFNETAYCLGVEKLLGIEDQIPDRATVLRVLLMELNRLSSHLVCIATGGMELGATTIMIYGFRDRELVLDLFELFTGLRMNHAFVRPGGLAQDLPPGAVDRLREFIKTMKKNLPEYDKLATGNPIFKARMQDVGYLDLTGCMALGATGPVLRSAGLPHDLRKSDPYCGYETYDFEVPTADTCDSYGRFLIRLEEMRQSLRIIEQCIDRLEPGPVMVADKKIAWPAQLALGPDGLGNSLDHIRNIMGTSMEALIHHFKLVTEGFRVPPGQVYTAVESPKGELGVHVVSDGGTRPYRVHFRDPSFTNLQAMAAMCEGGQVADVIVAVASIDPVMGGVDR.

This sequence belongs to the complex I 49 kDa subunit family. NDH-1 is composed of 14 different subunits. Subunits NuoB, C, D, E, F, and G constitute the peripheral sector of the complex.

The protein resides in the cell membrane. The enzyme catalyses a quinone + NADH + 5 H(+)(in) = a quinol + NAD(+) + 4 H(+)(out). In terms of biological role, NDH-1 shuttles electrons from NADH, via FMN and iron-sulfur (Fe-S) centers, to quinones in the respiratory chain. The immediate electron acceptor for the enzyme in this species is believed to be a menaquinone. Couples the redox reaction to proton translocation (for every two electrons transferred, four hydrogen ions are translocated across the cytoplasmic membrane), and thus conserves the redox energy in a proton gradient. The protein is NADH-quinone oxidoreductase subunit D 1 of Streptomyces griseus subsp. griseus (strain JCM 4626 / CBS 651.72 / NBRC 13350 / KCC S-0626 / ISP 5235).